The following is a 37-amino-acid chain: Ice-structuring protein 3 (37 aa).

This sequence belongs to the type-I AFP family.

Functionally, contributes to protect fish blood from freezing at subzero sea water temperatures. Lowers the blood freezing point. Binds to nascent ice crystals and prevents further growth. This chain is Ice-structuring protein 3, found in Pseudopleuronectes americanus (Winter flounder).